We begin with the raw amino-acid sequence, 368 residues long: Peptide chain release factor 2 (368 aa).

Gln250 carries the post-translational modification N5-methylglutamine.

It belongs to the prokaryotic/mitochondrial release factor family. In terms of processing, methylated by PrmC. Methylation increases the termination efficiency of RF2.

The protein localises to the cytoplasm. In terms of biological role, peptide chain release factor 2 directs the termination of translation in response to the peptide chain termination codons UGA and UAA. This is Peptide chain release factor 2 from Mycolicibacterium smegmatis (strain ATCC 700084 / mc(2)155) (Mycobacterium smegmatis).